The chain runs to 388 residues: Translation initiation factor eIF2B subunit beta (388 aa).

Positions 109-133 are disordered; it reads DDFETTTSNNNNNNNNNNINSSSNI. Over residues 116-133 the composition is skewed to low complexity; that stretch reads SNNNNNNNNNNINSSSNI.

Belongs to the eIF-2B alpha/beta/delta subunits family. Component of the translation initiation factor 2B (eIF2B) complex which is a heterodecamer of two sets of five different subunits: alpha, beta, gamma, delta and epsilon. Subunits alpha, beta and delta comprise a regulatory subcomplex and subunits epsilon and gamma comprise a catalytic subcomplex. Within the complex, the hexameric regulatory complex resides at the center, with the two heterodimeric catalytic subcomplexes bound on opposite sides.

The protein resides in the cytoplasm. It is found in the cytosol. Functionally, acts as a component of the translation initiation factor 2B (eIF2B) complex, which catalyzes the exchange of GDP for GTP on eukaryotic initiation factor 2 (eIF2) gamma subunit. Its guanine nucleotide exchange factor activity is repressed when bound to eIF2 complex phosphorylated on the alpha subunit, thereby limiting the amount of methionyl-initiator methionine tRNA available to the ribosome and consequently global translation is repressed. The sequence is that of Translation initiation factor eIF2B subunit beta (eif2b2) from Dictyostelium discoideum (Social amoeba).